Here is a 63-residue protein sequence, read N- to C-terminus: ATP synthase F(0) complex subunit 8 (63 aa).

A helical transmembrane segment spans residues 8-24 (TWLLTILSMLLTLFVLF). An N6-acetyllysine modification is found at lysine 57.

Belongs to the ATPase protein 8 family. Component of the ATP synthase complex composed at least of ATP5F1A/subunit alpha, ATP5F1B/subunit beta, ATP5MC1/subunit c (homooctomer), MT-ATP6/subunit a, MT-ATP8/subunit 8, ATP5ME/subunit e, ATP5MF/subunit f, ATP5MG/subunit g, ATP5MK/subunit k, ATP5MJ/subunit j, ATP5F1C/subunit gamma, ATP5F1D/subunit delta, ATP5F1E/subunit epsilon, ATP5PF/subunit F6, ATP5PB/subunit b, ATP5PD/subunit d, ATP5PO/subunit OSCP. ATP synthase complex consists of a soluble F(1) head domain (subunits alpha(3) and beta(3)) - the catalytic core - and a membrane F(0) domain - the membrane proton channel (subunits c, a, 8, e, f, g, k and j). These two domains are linked by a central stalk (subunits gamma, delta, and epsilon) rotating inside the F1 region and a stationary peripheral stalk (subunits F6, b, d, and OSCP). Interacts with PRICKLE3.

The protein localises to the mitochondrion membrane. In terms of biological role, subunit 8, of the mitochondrial membrane ATP synthase complex (F(1)F(0) ATP synthase or Complex V) that produces ATP from ADP in the presence of a proton gradient across the membrane which is generated by electron transport complexes of the respiratory chain. ATP synthase complex consist of a soluble F(1) head domain - the catalytic core - and a membrane F(1) domain - the membrane proton channel. These two domains are linked by a central stalk rotating inside the F(1) region and a stationary peripheral stalk. During catalysis, ATP synthesis in the catalytic domain of F(1) is coupled via a rotary mechanism of the central stalk subunits to proton translocation. In vivo, can only synthesize ATP although its ATP hydrolase activity can be activated artificially in vitro. Part of the complex F(0) domain. The polypeptide is ATP synthase F(0) complex subunit 8 (Balaenoptera musculus (Blue whale)).